Consider the following 259-residue polypeptide: MTKTLTQHLETIKREGKGIFLPYIMAGDHEKGLAGLAETIAFLENLGVSAIEIGLPFSDPVADGPVIEEAGLRSLGHHTSAKSLVASLQKLDTQLPLIIMTYFNPIFQYGLKDFVKDLATTPVKGLIIPDLPYEHRNFILPLLEDSDLALIPLVSLTTGLERQQELIKEAEGFIYAVAINGVTGKSGSYRNDLDQHLSKLHDIAEIPVLTGFGVSTLEDVDRFNQVSDGVIVGSKIVKALHEKDDSIAAFIQEAAAYKK.

Catalysis depends on proton acceptor residues glutamate 52 and aspartate 63.

The protein belongs to the TrpA family. As to quaternary structure, tetramer of two alpha and two beta chains.

It catalyses the reaction (1S,2R)-1-C-(indol-3-yl)glycerol 3-phosphate + L-serine = D-glyceraldehyde 3-phosphate + L-tryptophan + H2O. The protein operates within amino-acid biosynthesis; L-tryptophan biosynthesis; L-tryptophan from chorismate: step 5/5. Its function is as follows. The alpha subunit is responsible for the aldol cleavage of indoleglycerol phosphate to indole and glyceraldehyde 3-phosphate. This chain is Tryptophan synthase alpha chain, found in Streptococcus gordonii (strain Challis / ATCC 35105 / BCRC 15272 / CH1 / DL1 / V288).